A 92-amino-acid chain; its full sequence is Tachykinin-2 (92 aa).

The first 22 residues, 1 to 22 (MIRVGLILCCIFIVGVFEASSA), serve as a signal peptide directing secretion. Residues 23-37 (DDILTAHNLIKRSEV) constitute a propeptide that is removed on maturation. The residue at position 49 (Met-49) is a Methionine amide. Residues 52–92 (SEELTRRLIQHPGSMSETSKRGPPKKGDFNPNELKPESNIC) constitute a propeptide that is removed on maturation. A disordered region spans residues 61-92 (QHPGSMSETSKRGPPKKGDFNPNELKPESNIC).

This sequence belongs to the tachykinin family. Expressed in the posterior salivary gland and more specifically in the mucus-secreting gland cells.

It is found in the secreted. Its function is as follows. Tachykinins are active peptides which excite neurons, evoke behavioral responses, are potent vasodilators and secretagogues, and contract (directly or indirectly) many smooth muscles. The sequence is that of Tachykinin-2 from Octopus vulgaris (Common octopus).